The sequence spans 293 residues: MIILLFFVDQIHQRDLNEIYQRVAAKLQQEDSLSHQKQRSDQFEKLKRGKTVLEGMLRFLSLSKSNIKPDLKDSMDYRKNNIMNFLNMQSLRKTVQKLQLTKSEIQPMQQPLSQTVQDQSHDDQTTLQMQSMSMQGAGSRVQQIRQGVLQSLEIGTPGISASPLLPELTSPDGNIINPLTSTCGKSSATELPIERLIRAMKSISPQALSSAVCDIRSVVSMVDRIAGSVPGKGSRASFGVDLVAMTKCHLQERNFMTQDGDHEKEASDNPNAIKCCFIGRKALVIATSILLVW.

This sequence belongs to the plant Mediator complex subunit 15 family. In terms of assembly, component of the Mediator complex.

Its subcellular location is the nucleus. In terms of biological role, component of the Mediator complex, a coactivator involved in the regulated transcription of nearly all RNA polymerase II-dependent genes. Mediator functions as a bridge to convey information from gene-specific regulatory proteins to the basal RNA polymerase II transcription machinery. The Mediator complex, having a compact conformation in its free form, is recruited to promoters by direct interactions with regulatory proteins and serves for the assembly of a functional preinitiation complex with RNA polymerase II and the general transcription factors. This Arabidopsis thaliana (Mouse-ear cress) protein is Probable mediator of RNA polymerase II transcription subunit 15b (MED15B).